The following is a 291-amino-acid chain: Nucleotide-binding protein LGAS_1315 (291 aa).

13 to 20 is an ATP binding site; sequence GMSGAGKT. Residue 63–66 coordinates GTP; that stretch reads DLRV.

It belongs to the RapZ-like family.

In terms of biological role, displays ATPase and GTPase activities. The protein is Nucleotide-binding protein LGAS_1315 of Lactobacillus gasseri (strain ATCC 33323 / DSM 20243 / BCRC 14619 / CIP 102991 / JCM 1131 / KCTC 3163 / NCIMB 11718 / NCTC 13722 / AM63).